The chain runs to 245 residues: Ribonuclease 3 (245 aa).

The RNase III domain maps to 19-144; the sequence is ASILEERTGH…LIATIYLDGG (126 aa). Position 57 (E57) interacts with Mg(2+). Residue D61 is part of the active site. Residues D130 and E133 each coordinate Mg(2+). E133 is an active-site residue. The 70-residue stretch at 169-238 folds into the DRBM domain; the sequence is DAKTELQEWA…AEAMLYREGV (70 aa).

The protein belongs to the ribonuclease III family. Homodimer. Mg(2+) is required as a cofactor.

The protein localises to the cytoplasm. The catalysed reaction is Endonucleolytic cleavage to 5'-phosphomonoester.. Its function is as follows. Digests double-stranded RNA. Involved in the processing of primary rRNA transcript to yield the immediate precursors to the large and small rRNAs (23S and 16S). Processes some mRNAs, and tRNAs when they are encoded in the rRNA operon. Processes pre-crRNA and tracrRNA of type II CRISPR loci if present in the organism. This chain is Ribonuclease 3, found in Brucella abortus (strain S19).